The sequence spans 143 residues: Interleukin-4 (143 aa).

The N-terminal stretch at 1-19 (MGLSPQLAAVLLCLLVCTG) is a signal peptide. Disulfide bonds link Cys-48/Cys-88 and Cys-70/Cys-115. N-linked (GlcNAc...) asparagine glycosylation is found at Asn-62 and Asn-91.

The protein belongs to the IL-4/IL-13 family.

It is found in the secreted. Its function is as follows. Participates in at least several B-cell activation processes as well as of other cell types. It is a costimulator of DNA-synthesis. It induces the expression of class II MHC molecules on resting B-cells. It enhances both secretion and cell surface expression of IgE and IgG1. It also regulates the expression of the low affinity Fc receptor for IgE (CD23) on both lymphocytes and monocytes. Positively regulates IL31RA expression in macrophages. Stimulates autophagy in dendritic cells by interfering with mTORC1 signaling and through the induction of RUFY4. The polypeptide is Interleukin-4 (IL4) (Meriones unguiculatus (Mongolian jird)).